A 138-amino-acid chain; its full sequence is MSALAYPRVNRLAEEIKKIISHMIRNDLRDPRIAKMTSIIEVNVTRDLRFATIYISVLGDQQEKEETIEGLKKSSGFIRKEVGRQITARFTPELIFKLDESIERGVYMYDVISKVTQKDMDEKKNSDEKRDSDEKLED.

The disordered stretch occupies residues 119–138; that stretch reads DMDEKKNSDEKRDSDEKLED.

It belongs to the RbfA family. As to quaternary structure, monomer. Binds 30S ribosomal subunits, but not 50S ribosomal subunits or 70S ribosomes.

It is found in the cytoplasm. In terms of biological role, one of several proteins that assist in the late maturation steps of the functional core of the 30S ribosomal subunit. Associates with free 30S ribosomal subunits (but not with 30S subunits that are part of 70S ribosomes or polysomes). Required for efficient processing of 16S rRNA. May interact with the 5'-terminal helix region of 16S rRNA. The chain is Ribosome-binding factor A from Alkaliphilus metalliredigens (strain QYMF).